The following is a 132-amino-acid chain: uncharacterized protein (132 aa).

A disordered region spans residues 68–91 (WSRTSPNSSRSSPRSPASMASTSS).

This is an uncharacterized protein from Streptomyces cacaoi.